The following is a 509-amino-acid chain: ATP synthase subunit alpha (509 aa).

169–176 (GDRQTGKT) is an ATP binding site.

Belongs to the ATPase alpha/beta chains family. As to quaternary structure, F-type ATPases have 2 components, CF(1) - the catalytic core - and CF(0) - the membrane proton channel. CF(1) has five subunits: alpha(3), beta(3), gamma(1), delta(1), epsilon(1). CF(0) has three main subunits: a(1), b(2) and c(9-12). The alpha and beta chains form an alternating ring which encloses part of the gamma chain. CF(1) is attached to CF(0) by a central stalk formed by the gamma and epsilon chains, while a peripheral stalk is formed by the delta and b chains.

The protein localises to the cell inner membrane. The catalysed reaction is ATP + H2O + 4 H(+)(in) = ADP + phosphate + 5 H(+)(out). Functionally, produces ATP from ADP in the presence of a proton gradient across the membrane. The alpha chain is a regulatory subunit. In Bradyrhizobium diazoefficiens (strain JCM 10833 / BCRC 13528 / IAM 13628 / NBRC 14792 / USDA 110), this protein is ATP synthase subunit alpha.